A 461-amino-acid chain; its full sequence is D-phenylhydantoinase (461 aa).

A divalent metal cation is bound by residues histidine 59, histidine 61, and lysine 151. At lysine 151 the chain carries N6-carboxylysine. Tyrosine 156 is a binding site for substrate. A divalent metal cation is bound by residues histidine 182 and histidine 239. Residue serine 286 coordinates substrate. Aspartate 313 provides a ligand contact to a divalent metal cation. Asparagine 335 is a binding site for substrate.

This sequence belongs to the metallo-dependent hydrolases superfamily. Hydantoinase/dihydropyrimidinase family. In terms of assembly, homotetramer. A divalent metal cation is required as a cofactor. In terms of processing, carboxylation allows a single lysine to coordinate two divalent metal cations.

The catalysed reaction is D-5-phenylhydantoin + H2O = N-carbamoyl-D-phenylglycine + H(+). Its function is as follows. Catalyzes the stereospecific hydrolysis of the cyclic amide bond of D-hydantoin derivatives with an aromatic side chains at the 5'-position. Has no activity on dihydropyrimidines. The physiological function is unknown. This chain is D-phenylhydantoinase, found in Shigella boydii serotype 4 (strain Sb227).